Consider the following 102-residue polypeptide: Large ribosomal subunit protein bL21 (102 aa).

This sequence belongs to the bacterial ribosomal protein bL21 family. As to quaternary structure, part of the 50S ribosomal subunit. Contacts protein L20.

In terms of biological role, this protein binds to 23S rRNA in the presence of protein L20. This Ligilactobacillus salivarius (strain UCC118) (Lactobacillus salivarius) protein is Large ribosomal subunit protein bL21.